Here is a 429-residue protein sequence, read N- to C-terminus: C4-dicarboxylate transport protein (429 aa).

8 helical membrane-spanning segments follow: residues 9–29 (VLYVQVIFAIVVGVILGHYYP), 45–65 (LIKMVIGPIIFCTVVTGIAGM), 79–99 (LLYFEIVSTFALVLGLAATHI), 149–169 (GEILQILLIALLFGSVLAHLG), 185–205 (VLFGIVHIVTKLAPIGAFGAM), 223–243 (LIGTFYLTSVVFVLVVLGAIA), 308–328 (IYMTMAVLFIAQATNIELTWM), and 356–376 (AATLAVVPTIPLSGMVLILGI).

Belongs to the dicarboxylate/amino acid:cation symporter (DAACS) (TC 2.A.23) family.

The protein resides in the cell inner membrane. In terms of biological role, responsible for the transport of dicarboxylates such as succinate, fumarate, and malate from the periplasm across the membrane. This is C4-dicarboxylate transport protein from Burkholderia multivorans (strain ATCC 17616 / 249).